A 399-amino-acid polypeptide reads, in one-letter code: S-adenosylmethionine synthase (399 aa).

Histidine 17 contacts ATP. Aspartate 19 contacts Mg(2+). K(+) is bound at residue glutamate 45. 2 residues coordinate L-methionine: glutamate 58 and glutamine 101. Positions 101–111 are flexible loop; that stretch reads QSADIAMGVDQ. ATP contacts are provided by residues 177–179, 244–245, aspartate 253, 259–260, alanine 276, and lysine 280; these read DGK, RF, and RK. Aspartate 253 serves as a coordination point for L-methionine. Lysine 284 contributes to the L-methionine binding site.

It belongs to the AdoMet synthase family. As to quaternary structure, homotetramer; dimer of dimers. Mg(2+) serves as cofactor. The cofactor is K(+).

It is found in the cytoplasm. The catalysed reaction is L-methionine + ATP + H2O = S-adenosyl-L-methionine + phosphate + diphosphate. Its pathway is amino-acid biosynthesis; S-adenosyl-L-methionine biosynthesis; S-adenosyl-L-methionine from L-methionine: step 1/1. Its function is as follows. Catalyzes the formation of S-adenosylmethionine (AdoMet) from methionine and ATP. The overall synthetic reaction is composed of two sequential steps, AdoMet formation and the subsequent tripolyphosphate hydrolysis which occurs prior to release of AdoMet from the enzyme. The protein is S-adenosylmethionine synthase of Bacillus cereus (strain ATCC 10987 / NRS 248).